Consider the following 30-residue polypeptide: Cycloviolacin-O1 (30 aa).

The segment at residues 1 to 30 (GIPCAESCVYIPCTVTALLGCSCSNRVCYN) is a cross-link (cyclopeptide (Gly-Asn)). Cystine bridges form between Cys4–Cys21, Cys8–Cys23, and Cys13–Cys28.

This is a cyclic peptide. Expressed in leaves, petals, petioles and roots but not in runners (at protein level).

In terms of biological role, probably participates in a plant defense mechanism. This Viola odorata (Sweet violet) protein is Cycloviolacin-O1.